The following is a 292-amino-acid chain: MSYIPFPDISPELFSIELFGVTFALRWYALAYIAGLLIGWRLVLRMIRAERLWSFGPPMTEDQLERLLTWVILGVILGGRLGFVLFYQPAHYLAHPLDILKVWEGGMSFHGGFLGVMTALVAFCLKERISILPVADLLAAATPPGLFLGRIANFINAELWGRPTTLPWGVAFPGEAAQSCPGIEGICARHPSQIYEAGLEGILLFTVLSLLVWRRGWLHWPGSVSGMFLAGYGATRFLVEFVRQPDAQFVSAGNPLGLAWQISGYGLTMGQILSLPMILLGLYLILRSRRTA.

The next 3 membrane-spanning stretches (helical) occupy residues Leu-18–Ile-38, Leu-67–Tyr-87, and Gly-105–Leu-125. Arg-150 contributes to the a 1,2-diacyl-sn-glycero-3-phospho-(1'-sn-glycerol) binding site. The next 3 membrane-spanning stretches (helical) occupy residues Gln-193–Trp-213, Gly-222–Val-242, and Gly-266–Leu-286.

This sequence belongs to the Lgt family.

Its subcellular location is the cell inner membrane. The catalysed reaction is L-cysteinyl-[prolipoprotein] + a 1,2-diacyl-sn-glycero-3-phospho-(1'-sn-glycerol) = an S-1,2-diacyl-sn-glyceryl-L-cysteinyl-[prolipoprotein] + sn-glycerol 1-phosphate + H(+). It participates in protein modification; lipoprotein biosynthesis (diacylglyceryl transfer). Functionally, catalyzes the transfer of the diacylglyceryl group from phosphatidylglycerol to the sulfhydryl group of the N-terminal cysteine of a prolipoprotein, the first step in the formation of mature lipoproteins. In Cereibacter sphaeroides (strain ATCC 17023 / DSM 158 / JCM 6121 / CCUG 31486 / LMG 2827 / NBRC 12203 / NCIMB 8253 / ATH 2.4.1.) (Rhodobacter sphaeroides), this protein is Phosphatidylglycerol--prolipoprotein diacylglyceryl transferase.